Consider the following 81-residue polypeptide: Ferredoxin (81 aa).

Positions 2–30 (KYTIVDKETCIACGACGAAAPDIYDYDED) constitute a 4Fe-4S ferredoxin-type domain. Positions 11, 14, 17, and 61 each coordinate [4Fe-4S] cluster.

The cofactor is [4Fe-4S] cluster.

Its function is as follows. Ferredoxins are iron-sulfur proteins that transfer electrons in a wide variety of metabolic reactions. This chain is Ferredoxin, found in Bacillus thermoproteolyticus.